Consider the following 148-residue polypeptide: Myosin light chain 3, skeletal muscle isoform (148 aa).

Thr1 carries the post-translational modification N-acetylthreonine. EF-hand domains lie at 6 to 41 (DQIEDFKEAFGLFDRIGDSQVAFNQVADIMRALGQN) and 82 to 117 (GTYDDYVEGLRVFDKEGNGTVMGAELRIVLSTLGEK).

Myosin is a hexamer of 2 heavy chains and 4 light chains.

The chain is Myosin light chain 3, skeletal muscle isoform from Chelon ramada (Thin-lipped grey mullet).